The following is a 437-amino-acid chain: Transcriptional modulator WTM1 (437 aa).

One copy of the WD 1 repeat lies at 103–144 (YQGETVSKMAYLDKTGETTLLSMSKNGSLAWFKEGIKVPIHI). Thr-187 is modified (phosphothreonine). Ser-200 carries the post-translational modification Phosphoserine. WD repeat units lie at residues 221 to 259 (PGTT…KPIW), 264 to 304 (PKNG…AATT), and 326 to 366 (AGGD…SKYN). Residues 368–404 (DDTIAPPQDATEESQTKSLRFLHKGGSRRSPKQIGRR) form a disordered region. The residue at position 370 (Thr-370) is a Phosphothreonine. The segment covering 387-402 (RFLHKGGSRRSPKQIG) has biased composition (basic residues). Thr-406 carries the post-translational modification Phosphothreonine.

In terms of assembly, interacts with KAP122.

It is found in the cytoplasm. The protein resides in the nucleus. In terms of biological role, transcriptional modulator with roles in meiotic regulation and silencing. Acts either as an adapter to facilitate nuclear import by KAP122 of the RNR2-RNR4 heterodimer, also called beta-beta' subunit, which corresponds to the small subunit of the ribonucleotide reductase (RNR); or as an anchor to retain RNR2-RNR4 in the nucleus. The chain is Transcriptional modulator WTM1 (WTM1) from Saccharomyces cerevisiae (strain ATCC 204508 / S288c) (Baker's yeast).